Consider the following 288-residue polypeptide: Bifunctional protein FolD 2 (288 aa).

NADP(+)-binding positions include 166 to 168 (GRS) and serine 191.

Belongs to the tetrahydrofolate dehydrogenase/cyclohydrolase family. As to quaternary structure, homodimer.

The catalysed reaction is (6R)-5,10-methylene-5,6,7,8-tetrahydrofolate + NADP(+) = (6R)-5,10-methenyltetrahydrofolate + NADPH. It catalyses the reaction (6R)-5,10-methenyltetrahydrofolate + H2O = (6R)-10-formyltetrahydrofolate + H(+). The protein operates within one-carbon metabolism; tetrahydrofolate interconversion. In terms of biological role, catalyzes the oxidation of 5,10-methylenetetrahydrofolate to 5,10-methenyltetrahydrofolate and then the hydrolysis of 5,10-methenyltetrahydrofolate to 10-formyltetrahydrofolate. The protein is Bifunctional protein FolD 2 of Myxococcus xanthus (strain DK1622).